A 292-amino-acid polypeptide reads, in one-letter code: 11-beta-hydroxysteroid dehydrogenase 1 (292 aa).

Topologically, residues 1–7 are cytoplasmic; sequence MAFMKKY. A helical; Signal-anchor for type II membrane protein transmembrane segment spans residues 8 to 24; it reads LLPILGLFMAYYYYSAN. Over 25-292 the chain is Lumenal; sequence EEFRPEMLQG…SYNMDRFINK (268 aa). Residues 41–67, 92–93, and 119–121 each bind NADP(+); these read GASK…TARS, TM, and NHI. 2 N-linked (GlcNAc...) asparagine glycosylation sites follow: N123 and N162. S170 provides a ligand contact to substrate. The active-site Proton acceptor is Y183. 183–187 is a binding site for NADP(+); that stretch reads YSASK. N-linked (GlcNAc...) asparagine glycosylation occurs at N207. Residue 218–222 coordinates NADP(+); sequence IDTET.

It belongs to the short-chain dehydrogenases/reductases (SDR) family. Homodimer. In terms of processing, glycosylated. In terms of tissue distribution, widely expressed, highest expression in liver, lower in testis, ovary, lung, foreskin fibroblasts, and much lower in kidney. Expressed in liver (at protein level). Expressed in the basal cells of the corneal epithelium and in the ciliary nonpigmented epithelium (both at mRNA and at protein level).

Its subcellular location is the endoplasmic reticulum membrane. The catalysed reaction is an 11beta-hydroxysteroid + NADP(+) = an 11-oxosteroid + NADPH + H(+). It catalyses the reaction cortisone + NADPH + H(+) = cortisol + NADP(+). It carries out the reaction corticosterone + NADP(+) = 11-dehydrocorticosterone + NADPH + H(+). The enzyme catalyses a 7beta-hydroxysteroid + NADP(+) = a 7-oxosteroid + NADPH + H(+). The catalysed reaction is 7-oxocholesterol + NADPH + H(+) = 7beta-hydroxycholesterol + NADP(+). It catalyses the reaction chenodeoxycholate + NADP(+) = 7-oxolithocholate + NADPH + H(+). It carries out the reaction 7-oxolithocholate + NADPH + H(+) = ursodeoxycholate + NADP(+). The enzyme catalyses glycochenodeoxycholate + NADP(+) = 7-oxoglycolithocholate + NADPH + H(+). The catalysed reaction is taurochenodeoxycholate + NADP(+) = 7-oxotaurolithocholate + NADPH + H(+). It catalyses the reaction tauroursodeoxycholate + NADP(+) = 7-oxotaurolithocholate + NADPH + H(+). It carries out the reaction glycoursodeoxycholate + NADP(+) = 7-oxoglycolithocholate + NADPH + H(+). The enzyme catalyses 7-oxopregnenolone + NADPH + H(+) = 7beta-hydroxypregnenolone + NADP(+). The catalysed reaction is 3beta,7alpha-dihydroxyandrost-5-en-17-one + NADP(+) = 3beta-hydroxy-5-androstene-7,17-dione + NADPH + H(+). It catalyses the reaction 3beta-hydroxy-5-androstene-7,17-dione + NADPH + H(+) = 3beta,7beta-dihydroxyandrost-5-en-17-one + NADP(+). It carries out the reaction 3beta-hydroxy-5alpha-androstane-7,17-dione + NADPH + H(+) = 3beta,7beta-dihydroxy-5alpha-androstan-17-one + NADP(+). It functions in the pathway steroid metabolism. Hexose-6-phosphate dehydrogenase (H6PD) provides cosubstrate NADPH, and the glucose-6-phosphate transporter in the ER-membrane supplies the substrate for H6PDH, their activities stimulate the reduction of cortisone and abolish the oxidation of cortisol. Functionally, controls the reversible conversion of biologically active glucocorticoids such as cortisone to cortisol, and 11-dehydrocorticosterone to corticosterone in the presence of NADP(H). Participates in the corticosteroid receptor-mediated anti-inflammatory response, as well as metabolic and homeostatic processes. Plays a role in the secretion of aqueous humor in the eye, maintaining a normotensive, intraocular environment. Bidirectional in vitro, predominantly functions as a reductase in vivo, thereby increasing the concentration of active glucocorticoids. It has broad substrate specificity, besides glucocorticoids, it accepts other steroid and sterol substrates. Interconverts 7-oxo- and 7-hydroxy-neurosteroids such as 7-oxopregnenolone and 7beta-hydroxypregnenolone, 7-oxodehydroepiandrosterone (3beta-hydroxy-5-androstene-7,17-dione) and 7beta-hydroxydehydroepiandrosterone (3beta,7beta-dihydroxyandrost-5-en-17-one), among others. Catalyzes the stereo-specific conversion of the major dietary oxysterol, 7-ketocholesterol (7-oxocholesterol), into the more polar 7-beta-hydroxycholesterol metabolite. 7-oxocholesterol is one of the most important oxysterols, it participates in several events such as induction of apoptosis, accumulation in atherosclerotic lesions, lipid peroxidation, and induction of foam cell formation. Mediates the 7-oxo reduction of 7-oxolithocholate mainly to chenodeoxycholate, and to a lesser extent to ursodeoxycholate, both in its free form and when conjugated to glycine or taurine, providing a link between glucocorticoid activation and bile acid metabolism. Catalyzes the synthesis of 7-beta-25-dihydroxycholesterol from 7-oxo-25-hydroxycholesterol in vitro, which acts as a ligand for the G-protein-coupled receptor (GPCR) Epstein-Barr virus-induced gene 2 (EBI2) and may thereby regulate immune cell migration. This is 11-beta-hydroxysteroid dehydrogenase 1 from Homo sapiens (Human).